Here is a 412-residue protein sequence, read N- to C-terminus: MLTKKDTQSAKEQEKLKAIPLHSFLKYANVFYLSIGMMAYDHKYSQKWKEVLLHWTFIAQMVNLNTVLISELIYVFLAIGKGSNFLEATMNLSFIGFVIVGDFKIWNISRQRKRLTQVVSRLEELHPQGLAQQEPYNIGHHLSGYSRYSKFYFGMHMVLIWTYNLYWAVYYLVCDFWLGMRQFERMLPYYCWVPWDWSTGYSYYFMYISQNIGGQACLSGQLAADMLMCALVTLVVMHFIRLSAHIESHVAGIGSFQHDLEFLQATVAYHQSLIHLCQDINEIFGVSLLSNFVSSSFIICFVGFQMTIGSKIDNLVMLVLFLFCAMVQVFMIATHAQRLVDASEQIGQAVYNHDWFRADLRYRKMLILIIKRAQQPSRLKATMFLNISLVTVSDLLQLSYKFFALLRTMYVN.

Over 1 to 56 the chain is Cytoplasmic; it reads MLTKKDTQSAKEQEKLKAIPLHSFLKYANVFYLSIGMMAYDHKYSQKWKEVLLHWT. A helical membrane pass occupies residues 57 to 77; sequence FIAQMVNLNTVLISELIYVFL. Topologically, residues 78 to 84 are extracellular; sequence AIGKGSN. A helical membrane pass occupies residues 85-105; sequence FLEATMNLSFIGFVIVGDFKI. Residues 106–152 are Cytoplasmic-facing; that stretch reads WNISRQRKRLTQVVSRLEELHPQGLAQQEPYNIGHHLSGYSRYSKFY. The helical transmembrane segment at 153 to 173 threads the bilayer; the sequence is FGMHMVLIWTYNLYWAVYYLV. Over 174–219 the chain is Extracellular; that stretch reads CDFWLGMRQFERMLPYYCWVPWDWSTGYSYYFMYISQNIGGQACLS. The chain crosses the membrane as a helical span at residues 220-240; the sequence is GQLAADMLMCALVTLVVMHFI. Topologically, residues 241–282 are cytoplasmic; it reads RLSAHIESHVAGIGSFQHDLEFLQATVAYHQSLIHLCQDINE. A helical membrane pass occupies residues 283–303; the sequence is IFGVSLLSNFVSSSFIICFVG. At 304–314 the chain is on the extracellular side; that stretch reads FQMTIGSKIDN. Residues 315-335 traverse the membrane as a helical segment; it reads LVMLVLFLFCAMVQVFMIATH. Residues 336 to 382 are Cytoplasmic-facing; the sequence is AQRLVDASEQIGQAVYNHDWFRADLRYRKMLILIIKRAQQPSRLKAT. The helical transmembrane segment at 383-403 threads the bilayer; sequence MFLNISLVTVSDLLQLSYKFF. Residues 404-412 lie on the Extracellular side of the membrane; it reads ALLRTMYVN.

This sequence belongs to the insect chemoreceptor superfamily. Heteromeric odorant receptor channel (TC 1.A.69) family. Or49a subfamily. Interacts with Orco. Complexes exist early in the endomembrane system in olfactory sensory neurons (OSNs), coupling these complexes to the conserved ciliary trafficking pathway. Expressed in olfactory sensory neurons in the maxillary palp.

Its subcellular location is the cell membrane. Functionally, odorant receptor which mediates acceptance or avoidance behavior, depending on its substrates. The odorant receptor repertoire encodes a large collection of odor stimuli that vary widely in identity, intensity, and duration. May form a complex with Orco to form odorant-sensing units, providing sensitive and prolonged odorant signaling and calcium permeability. The sequence is that of Putative odorant receptor 85d (Or85d) from Drosophila melanogaster (Fruit fly).